We begin with the raw amino-acid sequence, 784 residues long: Copal-8-ol diphosphate hydratase TPSSA9, chloroplastic (784 aa).

Residue arginine 240 coordinates substrate. Aspartate 372 and aspartate 374 together coordinate Mg(2+). The short motif at 372–375 (DIDD) is the DXDD motif element. Arginine 459 serves as a coordination point for substrate.

Belongs to the terpene synthase family.

The protein resides in the plastid. Its subcellular location is the chloroplast. The catalysed reaction is (2E,6E,10E)-geranylgeranyl diphosphate + H2O = 8-hydroxycopalyl diphosphate. The protein operates within secondary metabolite biosynthesis; terpenoid biosynthesis. Involved in the biosynthesis of labdane-type diterpenoid including sclareol, a diterpene-diol that is used as fragrance and flavoring, and has anticancer effects (able to kill leukemic and colon cancer cells by apoptosis). Sclareol can also be used as synthesis precursor of ambergris substitution fragance products such as ambrox. Terpene synthase that produces 8-hydroxycopalyl diphosphate from geranylgeranyl diphosphate (GGPP). The polypeptide is Copal-8-ol diphosphate hydratase TPSSA9, chloroplastic (Salvia sclarea (Clary sage)).